The primary structure comprises 390 residues: Cell adhesion molecule 4 (390 aa).

An N-terminal signal peptide occupies residues 1 to 27 (MAPALTALNRCFVLGILLLVTAGTAFS). The Ig-like V-type domain maps to 28-122 (QEVQAENVTV…DTHHQIATLT (95 aa)). The Extracellular portion of the chain corresponds to 28-326 (QEVQAENVTV…IEAQTQVPYA (299 aa)). N-linked (GlcNAc...) asparagine glycosylation is found at Asn-34 and Asn-70. 3 disulfide bridges follow: Cys-47-Cys-107, Cys-148-Cys-202, and Cys-247-Cys-293. Ig-like C2-type domains lie at 127 to 219 (PDNP…TQYE) and 226 to 309 (PTAS…YVLV). Residues Asn-264 and Asn-288 are each glycosylated (N-linked (GlcNAc...) asparagine). The helical transmembrane segment at 327 to 347 (VIGGILALLVFLVICILIVMV) threads the bilayer. Residues 348–390 (WCSVRQKGSYLTHEASGLDEHGEAREAFLNGGENHKRKEEFFI) lie on the Cytoplasmic side of the membrane.

This sequence belongs to the nectin family.

It is found in the membrane. Involved in the cell-cell adhesion. This Xenopus laevis (African clawed frog) protein is Cell adhesion molecule 4 (cadm4).